Here is a 294-residue protein sequence, read N- to C-terminus: N-acetylmuramic acid 6-phosphate etherase (294 aa).

Residues 56–219 (TSYSLKNGGR…STLSMVSVGK (164 aa)) enclose the SIS domain. Glutamate 84 (proton donor) is an active-site residue. Residue glutamate 115 is part of the active site.

It belongs to the GCKR-like family. MurNAc-6-P etherase subfamily. As to quaternary structure, homodimer.

It carries out the reaction N-acetyl-D-muramate 6-phosphate + H2O = N-acetyl-D-glucosamine 6-phosphate + (R)-lactate. It participates in amino-sugar metabolism; 1,6-anhydro-N-acetylmuramate degradation. The protein operates within amino-sugar metabolism; N-acetylmuramate degradation. It functions in the pathway cell wall biogenesis; peptidoglycan recycling. Specifically catalyzes the cleavage of the D-lactyl ether substituent of MurNAc 6-phosphate, producing GlcNAc 6-phosphate and D-lactate. Together with AnmK, is also required for the utilization of anhydro-N-acetylmuramic acid (anhMurNAc) either imported from the medium or derived from its own cell wall murein, and thus plays a role in cell wall recycling. The protein is N-acetylmuramic acid 6-phosphate etherase of Francisella tularensis subsp. novicida (strain U112).